A 390-amino-acid chain; its full sequence is Multidrug export protein EmrA (390 aa).

Residues 1-24 are Cytoplasmic-facing; the sequence is MSANAETQTPQQPVKKSGKRKRLL. Residues 25-45 traverse the membrane as a helical segment; sequence LLLTLLFIIIAVAIGIYWFLV. Topologically, residues 46–390 are periplasmic; sequence LRHFEETDDA…IDDIVKANAG (345 aa). The stretch at 120 to 180 forms a coiled coil; the sequence is INSKQLQANI…QAQLDVAIQQ (61 aa).

It belongs to the membrane fusion protein (MFP) (TC 8.A.1) family. In terms of assembly, homodimer and homotrimer. Part of the tripartite efflux system EmrAB-TolC, which is composed of an inner membrane transporter, EmrB, a periplasmic membrane fusion protein, EmrA, and an outer membrane component, TolC. The complex forms a large protein conduit and can translocate molecules across both the inner and outer membranes. Interacts with EmrB. EmrAB complex forms a dimer in vitro.

Its subcellular location is the cell inner membrane. Its function is as follows. Part of the tripartite efflux system EmrAB-TolC, which confers resistance to antibiotics such as CCCP, FCCP, 2,4-dinitrophenol and nalidixic acid. EmrA is a drug-binding protein that provides a physical link between EmrB and TolC. In Escherichia coli (strain K12), this protein is Multidrug export protein EmrA (emrA).